The primary structure comprises 246 residues: Small ribosomal subunit protein uS2 (246 aa).

The protein belongs to the universal ribosomal protein uS2 family.

This chain is Small ribosomal subunit protein uS2, found in Dictyoglomus turgidum (strain DSM 6724 / Z-1310).